Here is a 290-residue protein sequence, read N- to C-terminus: MVEMEQAEAQLSELDLLASMFPSENELIVNDQLALAELKDCIEKRTMEGRSSQVYFTINVSLDLSEAAVVTFSLSCILPFKYPTVLPEITVRSVSLSRSQQTQLNTDLIAYLQKNCLGDVCILNATEWVKEHAFDYVNIEALPSPARQSTAQPEDLAFTRLWIYSHHIYNKCKRRNILEWAKELSLTGFSMPGKPGVVCVEGPQSACEEFWSRLRKLNWKRILIRHREDIPLDGTAGGMEGQRKFPILEEKAFSVHGARGNHMDFGQLYQFLNARGCGDVFQMFFGVEGQ.

The region spanning 12 to 136 (SELDLLASMF…EWVKEHAFDY (125 aa)) is the RWD domain.

In Mus musculus (Mouse), this protein is RWD domain-containing protein 2B (Rwdd2b).